We begin with the raw amino-acid sequence, 792 residues long: Phenylalanine--tRNA ligase beta subunit (792 aa).

Residues 39-147 (GEALDLIVVA…DDAPIGTPLA (109 aa)) enclose the tRNA-binding domain. A B5 domain is found at 400-475 (PAPASILLRR…RIRGYEHLPT (76 aa)). Residues Asp453, Asp459, Glu462, and Glu463 each coordinate Mg(2+). Residues 698-791 (SRFPFVRRDL…IQQRHDVRIR (94 aa)) enclose the FDX-ACB domain.

The protein belongs to the phenylalanyl-tRNA synthetase beta subunit family. Type 1 subfamily. In terms of assembly, tetramer of two alpha and two beta subunits. Requires Mg(2+) as cofactor.

The protein localises to the cytoplasm. The enzyme catalyses tRNA(Phe) + L-phenylalanine + ATP = L-phenylalanyl-tRNA(Phe) + AMP + diphosphate + H(+). The protein is Phenylalanine--tRNA ligase beta subunit (pheT) of Xylella fastidiosa (strain 9a5c).